The following is a 351-amino-acid chain: Calcium release-activated calcium channel protein 1 (351 aa).

Residues 1–21 are compositionally biased toward polar residues; sequence MSVWTTANNSGLETPTKSPIT. 2 disordered regions span residues 1 to 39 and 71 to 141; these read MSVWTTANNSGLETPTKSPITSSVPRAARSSAVITTGNH and HAHP…EDLH. The Cytoplasmic portion of the chain corresponds to 1–163; the sequence is MSVWTTANNS…SRAKLKASSK (163 aa). 2 stretches are compositionally biased toward low complexity: residues 22–33 and 80–93; these read SSVPRAARSSAV and SNSPTGSGSNSNNS. The segment covering 94 to 106 has biased composition (polar residues); that stretch reads AGFQRTSISNSLL. Residues 164-181 form a helical membrane-spanning segment; the sequence is TSALLSGFAMVAMVEVQL. Residues 182-191 are Extracellular-facing; that stretch reads DHDTNVPPGM. Residues 192–212 form a helical membrane-spanning segment; the sequence is LIAFAICTTLLVAVHMLALMI. Topologically, residues 213–248 are cytoplasmic; the sequence is STCILPNIETVCNLHSISLVHESPHERLHWYIETAW. A helical membrane pass occupies residues 249–269; sequence AFSTLLGLILFLLEIAILCWV. At 270–277 the chain is on the extracellular side; sequence KFYDLSPP. The helical transmembrane segment at 278–298 threads the bilayer; sequence AAWSACVVLIPVMIIFMAFAI. Topologically, residues 299–351 are cytoplasmic; sequence HFYRSLVSHKYEVTVSGIRELEMLKEQMEQDHLEHHNNIRNNGMNYGASGDIV.

This sequence belongs to the Orai family. Hexamer.

It is found in the cell membrane. It carries out the reaction Ca(2+)(in) = Ca(2+)(out). Pore-forming subunit of inward rectifying Ca(2+) release-activated Ca(2+) (CRAC) channels. Assembles in hexameric CRAC channels that mediate Ca(2+) influx upon depletion of endoplasmic reticulum Ca(2+) store and channel activation by Ca(2+) sensor Stim, a process known as store-operated Ca(2+) entry (SOCE). Regulates transcription factor NFAT nuclear import. The chain is Calcium release-activated calcium channel protein 1 from Drosophila melanogaster (Fruit fly).